Here is an 860-residue protein sequence, read N- to C-terminus: Spindle and centriole-associated protein 1 (860 aa).

4 disordered regions span residues 127–150 (RKRT…GINQ), 172–201 (DDAG…HSNR), 230–250 (ATQS…AEDQ), and 294–332 (PLLA…TGSS). 3 stretches are compositionally biased toward polar residues: residues 139-150 (PDSSQSHTGINQ), 190-200 (ELPNSLSQHSN), and 230-245 (ATQS…SSEL). Thr-236 is subject to Phosphothreonine. The residue at position 240 (Ser-240) is a Phosphoserine. The segment covering 317–329 (SSSTASADRPSST) has biased composition (low complexity). Residues 383-439 (RYLKESEIQLRKEVETRQQLEQMLGDHRELIDALTAEILSLREENSTMQARLQQYMV) adopt a coiled-coil conformation. The segment at 623–645 (PAFVSLSQPPCSSLPSTQQPRNP) is disordered. Low complexity predominate over residues 627-642 (SLSQPPCSSLPSTQQP). Residue Ser-648 is modified to Phosphoserine. Positions 693-718 (ITSSGGEQGDGLREPRKQGSASEVST) are disordered. Positions 729-757 (SSMEERIAELNRQSMEARSKLLQLIEQQK) form a coiled coil. Phosphoserine is present on residues Ser-765, Ser-766, Ser-769, and Ser-824. The disordered stretch occupies residues 792-860 (GMEASESSKC…GWFALSAHIP (69 aa)). Over residues 804-824 (VSPVSGNSSRRSSGAISNSCS) the composition is skewed to low complexity.

Interacts with CEP120.

Its subcellular location is the cytoplasm. It is found in the cytoskeleton. It localises to the microtubule organizing center. The protein resides in the centrosome. The protein localises to the centriole. Its subcellular location is the spindle. Its function is as follows. Regulator required for centriole duplication, for proper bipolar spindle formation and chromosome congression in mitosis. In Mus musculus (Mouse), this protein is Spindle and centriole-associated protein 1 (Spice1).